The sequence spans 188 residues: MLVLASASPRRREILSRFIREFQIIPSSASEECSIADPREHALELARRKAREVYERLGKKATVIGADTVVSIGGKILGKPGNEEEAFRMLKTLSGRMHLVTTGYCIIHRGEEHCGAVVTEVKFRELDEDLIWAYIRTGEPMDKAGAYGIQGKGGLFVEWIRGDYYNVVGFPIEIIWKLKELGFDVLSR.

D67 functions as the Proton acceptor in the catalytic mechanism.

It belongs to the Maf family. YhdE subfamily. A divalent metal cation serves as cofactor.

It is found in the cytoplasm. It carries out the reaction dTTP + H2O = dTMP + diphosphate + H(+). The enzyme catalyses UTP + H2O = UMP + diphosphate + H(+). Nucleoside triphosphate pyrophosphatase that hydrolyzes dTTP and UTP. May have a dual role in cell division arrest and in preventing the incorporation of modified nucleotides into cellular nucleic acids. The polypeptide is dTTP/UTP pyrophosphatase (Thermococcus kodakarensis (strain ATCC BAA-918 / JCM 12380 / KOD1) (Pyrococcus kodakaraensis (strain KOD1))).